We begin with the raw amino-acid sequence, 476 residues long: 23S rRNA (uracil(1939)-C(5))-methyltransferase RlmD (476 aa).

The TRAM domain occupies 1 to 55; it reads MVDEVLKIESLDLEARGIARRDGKVVFVEGALPGERVYAATVRRKPSYEIARVET. [4Fe-4S] cluster contacts are provided by C68, C74, C77, and C156. Residues Q265, F294, N299, E315, N343, and D364 each contribute to the S-adenosyl-L-methionine site. The active-site Nucleophile is C394.

The protein belongs to the class I-like SAM-binding methyltransferase superfamily. RNA M5U methyltransferase family. RlmD subfamily.

The enzyme catalyses uridine(1939) in 23S rRNA + S-adenosyl-L-methionine = 5-methyluridine(1939) in 23S rRNA + S-adenosyl-L-homocysteine + H(+). Catalyzes the formation of 5-methyl-uridine at position 1939 (m5U1939) in 23S rRNA. The protein is 23S rRNA (uracil(1939)-C(5))-methyltransferase RlmD of Bordetella avium (strain 197N).